We begin with the raw amino-acid sequence, 144 residues long: Small ribosomal subunit protein uS11c (144 aa).

This sequence belongs to the universal ribosomal protein uS11 family. As to quaternary structure, part of the 30S ribosomal subunit.

Its subcellular location is the plastid. It localises to the chloroplast. The polypeptide is Small ribosomal subunit protein uS11c (Oenothera biennis (German evening primrose)).